A 527-amino-acid chain; its full sequence is Probable serine/threonine-protein kinase DDB_G0271538 (527 aa).

A compositionally biased stretch (basic and acidic residues) spans 1-10 (MNINFSKDDI). A disordered region spans residues 1 to 24 (MNINFSKDDITGLPKSTKEEDEND). The 262-residue stretch at 33-294 (LFMDVEIGRG…KIVVEGLKVL (262 aa)) folds into the Protein kinase domain. ATP contacts are provided by residues 39 to 47 (IGRGSFGQV) and Lys60. Catalysis depends on Asp156, which acts as the Proton acceptor. Disordered stretches follow at residues 304–375 (VKGK…ISGS), 422–452 (FTPP…DDVP), and 485–527 (TALD…KKKL). Residues 313-324 (DPDEDSFIDPND) are compositionally biased toward acidic residues. Residues 325-359 (DSNNNNNSENNNNNNDNSNENNENNNENNNNSNEN) are compositionally biased toward low complexity. Positions 440–452 (VDEDEDEDEDDVP) are enriched in acidic residues. The segment covering 512 to 527 (PKKKPNNKNKKKKKKL) has biased composition (basic residues).

It belongs to the protein kinase superfamily. TKL Ser/Thr protein kinase family.

The catalysed reaction is L-seryl-[protein] + ATP = O-phospho-L-seryl-[protein] + ADP + H(+). It catalyses the reaction L-threonyl-[protein] + ATP = O-phospho-L-threonyl-[protein] + ADP + H(+). This chain is Probable serine/threonine-protein kinase DDB_G0271538, found in Dictyostelium discoideum (Social amoeba).